Consider the following 474-residue polypeptide: Lipoprotein lipase (474 aa).

The signal sequence occupies residues 1 to 27 (MESKALLLVVLGVWLQSLTAFRGGVAA). An interaction with GPIHBP1 region spans residues 32–53 (RDFSDIESKFALRTPEDTAEDT). A disulfide bridge links C54 with C67. An N-linked (GlcNAc...) asparagine glycan is attached at N70. Residue Y121 is modified to 3'-nitrotyrosine. The Nucleophile role is filled by S159. Residue D183 is the Charge relay system of the active site. Residue Y191 is modified to 3'-nitrotyrosine. Residues A194, R197, S199, and D202 each contribute to the Ca(2+) site. C243 and C266 form a disulfide bridge. The interval 243 to 266 (CNIGEAIRVIAERGLGDVDQLVKC) is essential for determining substrate specificity. The active-site Charge relay system is H268. 2 disulfides stabilise this stretch: C291–C310 and C302–C305. A PLAT domain is found at 341–464 (FHYQVKIHFS…KGKDSAVFVK (124 aa)). A 3'-nitrotyrosine modification is found at Y343. Residue N386 is glycosylated (N-linked (GlcNAc...) asparagine). An important for interaction with lipoprotein particles region spans residues 417 to 421 (WPDWW). The segment at 430–434 (RIRVK) is important for heparin binding. Residues 443–467 (IFCAREKVSHLQKGKDSAVFVKCHD) are interaction with GPIHBP1. A disulfide bridge links C445 with C465.

Belongs to the AB hydrolase superfamily. Lipase family. As to quaternary structure, homodimer. Interacts with GPIHBP1 with 1:1 stoichiometry. Interacts with APOC2; the interaction activates LPL activity in the presence of lipids. Interaction with heparan sulfate proteoglycans is required to protect LPL against loss of activity. Associates with lipoprotein particles in blood plasma. Interacts with LMF1 and SEL1L; interaction with SEL1L is required to prevent aggregation of newly synthesized LPL in the endoplasmic reticulum (ER), and for normal export of LPL from the ER to the extracellular space. Interacts with SORL1; SORL1 acts as a sorting receptor, promoting LPL localization to endosomes and later to lysosomes, leading to degradation of newly synthesized LPL. In terms of processing, tyrosine nitration after lipopolysaccharide (LPS) challenge down-regulates the lipase activity. N-glycosylated. In terms of tissue distribution, detected in white and brown adipose tissue and heart muscle, especially at the lumenal surface of capillaries. Detected on capillary endothelium in the lactating mammary gland. Detected in blood plasma (at protein level). Expressed in liver, epididymal fat, heart, psoas muscle, lactating mammary gland, adrenal, lung, and ovary. Highest levels in heart and adrenal gland.

Its subcellular location is the cell membrane. It localises to the secreted. The protein resides in the extracellular space. It is found in the extracellular matrix. It carries out the reaction a triacylglycerol + H2O = a diacylglycerol + a fatty acid + H(+). It catalyses the reaction a 1,2-diacyl-sn-glycero-3-phosphocholine + H2O = a 2-acyl-sn-glycero-3-phosphocholine + a fatty acid + H(+). The enzyme catalyses 1,2,3-tri-(9Z-octadecenoyl)-glycerol + H2O = di-(9Z)-octadecenoylglycerol + (9Z)-octadecenoate + H(+). The catalysed reaction is 1,2-di-(9Z-octadecenoyl)-sn-glycero-3-phosphocholine + H2O = (9Z-octadecenoyl)-sn-glycero-3-phosphocholine + (9Z)-octadecenoate + H(+). It carries out the reaction 1,2,3-tributanoylglycerol + H2O = dibutanoylglycerol + butanoate + H(+). It catalyses the reaction 1,2-dihexadecanoyl-sn-glycero-3-phosphocholine + H2O = hexadecanoyl-sn-glycero-3-phosphocholine + hexadecanoate + H(+). The apolipoprotein APOC2 acts as a coactivator of LPL activity. Ca(2+) binding promotes protein stability and formation of the active homodimer. Interaction with GPIHBP1 protects LPL against inactivation by ANGPTL4. In terms of biological role, key enzyme in triglyceride metabolism. Catalyzes the hydrolysis of triglycerides from circulating chylomicrons and very low density lipoproteins (VLDL), and thereby plays an important role in lipid clearance from the blood stream, lipid utilization and storage. Although it has both phospholipase and triglyceride lipase activities it is primarily a triglyceride lipase with low but detectable phospholipase activity. Mediates margination of triglyceride-rich lipoprotein particles in capillaries. Recruited to its site of action on vascular endothelium by binding to GPIHBP1 and cell surface heparan sulfate proteoglycans. The polypeptide is Lipoprotein lipase (Lpl) (Mus musculus (Mouse)).